The chain runs to 470 residues: Cell division protein FtsA (470 aa).

The disordered stretch occupies residues Asn416–Glu470. Over residues Val425 to Gln434 the composition is skewed to acidic residues. Basic and acidic residues predominate over residues Glu436 to Phe461.

The protein belongs to the FtsA/MreB family. In terms of assembly, self-interacts. Interacts with FtsZ.

It localises to the cell membrane. In terms of biological role, cell division protein that is involved in the assembly of the Z ring. May serve as a membrane anchor for the Z ring. This chain is Cell division protein FtsA, found in Staphylococcus aureus (strain NCTC 8325 / PS 47).